The primary structure comprises 397 residues: MRKLTILGATGSIGSSTLAVAAQNPQLFEVVALAAGTNSQKMLELCRIWKPKYAAMASLQAAKELSVLLEKHEISTQVLAGDAGLCQVAALDEIDTVMAAIVGAAGLLPTMAGVKAGKRILLANKEALVMSGQMFIDACEQYGAELLPVDSEHNAIFQCLPADIQRAMGRCDLEEYGISKILLTGSGGPFRYTDIAELASVTPQMAIAHPNWSMGPKISVDSATMMNKGLEYIEARWLFNASREQLQVIIHPQSVIHSMVQYKDGSVLAQMGLPDMQTPIACAMSYPDRVDAGVAPLDFSKIGEFTFLPPDYSRYPCLKLAIDACYDGQAATTALNAANEIAVAAFLNNDIGFTDIAIINEQILNSANMATLVDLESVIELDMQARVLAHNIIRKVA.

Positions 10, 11, 12, 13, 36, 38, and 124 each coordinate NADPH. Position 125 (Lys-125) interacts with 1-deoxy-D-xylulose 5-phosphate. Glu-126 is a binding site for NADPH. Asp-150 is a Mn(2+) binding site. Residues Ser-151, Glu-152, Ser-186, and His-209 each coordinate 1-deoxy-D-xylulose 5-phosphate. Glu-152 serves as a coordination point for Mn(2+). Gly-215 contributes to the NADPH binding site. Residues Ser-222, Asn-227, Lys-228, and Glu-231 each contribute to the 1-deoxy-D-xylulose 5-phosphate site. A Mn(2+)-binding site is contributed by Glu-231.

It belongs to the DXR family. It depends on Mg(2+) as a cofactor. Requires Mn(2+) as cofactor.

It carries out the reaction 2-C-methyl-D-erythritol 4-phosphate + NADP(+) = 1-deoxy-D-xylulose 5-phosphate + NADPH + H(+). It participates in isoprenoid biosynthesis; isopentenyl diphosphate biosynthesis via DXP pathway; isopentenyl diphosphate from 1-deoxy-D-xylulose 5-phosphate: step 1/6. Functionally, catalyzes the NADPH-dependent rearrangement and reduction of 1-deoxy-D-xylulose-5-phosphate (DXP) to 2-C-methyl-D-erythritol 4-phosphate (MEP). The polypeptide is 1-deoxy-D-xylulose 5-phosphate reductoisomerase (Photobacterium profundum (strain SS9)).